The following is a 278-amino-acid chain: Pantothenate synthetase (278 aa).

30 to 37 lines the ATP pocket; the sequence is MGGLHQGH. The Proton donor role is filled by histidine 37. Glutamine 61 is a (R)-pantoate binding site. Glutamine 61 is a beta-alanine binding site. 146 to 149 contributes to the ATP binding site; that stretch reads GQKD. Position 152 (glutamine 152) interacts with (R)-pantoate. ATP is bound by residues isoleucine 175 and 183–186; that span reads MSTR.

It belongs to the pantothenate synthetase family. As to quaternary structure, homodimer.

The protein localises to the cytoplasm. It carries out the reaction (R)-pantoate + beta-alanine + ATP = (R)-pantothenate + AMP + diphosphate + H(+). Its pathway is cofactor biosynthesis; (R)-pantothenate biosynthesis; (R)-pantothenate from (R)-pantoate and beta-alanine: step 1/1. Functionally, catalyzes the condensation of pantoate with beta-alanine in an ATP-dependent reaction via a pantoyl-adenylate intermediate. This chain is Pantothenate synthetase, found in Ruthia magnifica subsp. Calyptogena magnifica.